Here is a 180-residue protein sequence, read N- to C-terminus: MMKHDIEKVLISEEEIQKKVKELGAELTSEYQDTFPLAIGVLKGALPFMADLIKHIDTYLEMDFMDVSSYGNSTVSSGEVKIIKDLDTSVEGRDILIIEDIIDSGLTLSYLVELFRYRKAKSIKIVTLLDKPSGRKADIKADFVGFEVPDAFVVGYGLDYAERYRNLPYIGVLKPAVYES.

Residues K43 and G44 each contribute to the diphosphate site. Positions 99 and 100 each coordinate Mg(2+). Residue D103 is the Proton acceptor of the active site. Residues K131, 152–153, and D159 contribute to the GMP site; that span reads FV. R165 contacts diphosphate.

It belongs to the purine/pyrimidine phosphoribosyltransferase family. Mg(2+) is required as a cofactor.

It is found in the cytoplasm. It catalyses the reaction IMP + diphosphate = hypoxanthine + 5-phospho-alpha-D-ribose 1-diphosphate. The enzyme catalyses GMP + diphosphate = guanine + 5-phospho-alpha-D-ribose 1-diphosphate. The protein operates within purine metabolism; IMP biosynthesis via salvage pathway; IMP from hypoxanthine: step 1/1. It participates in purine metabolism; GMP biosynthesis via salvage pathway; GMP from guanine: step 1/1. Purine salvage pathway enzyme that catalyzes the transfer of the ribosyl-5-phosphate group from 5-phospho-alpha-D-ribose 1-diphosphate (PRPP) to the N9 position of the 6-oxopurines hypoxanthine and guanine to form the corresponding ribonucleotides IMP (inosine 5'-monophosphate) and GMP (guanosine 5'-monophosphate), with the release of PPi. The chain is Hypoxanthine-guanine phosphoribosyltransferase (hprT) from Bacillus subtilis (strain 168).